We begin with the raw amino-acid sequence, 287 residues long: Ribosomal RNA small subunit methyltransferase I (287 aa).

The protein belongs to the methyltransferase superfamily. RsmI family.

It is found in the cytoplasm. The catalysed reaction is cytidine(1402) in 16S rRNA + S-adenosyl-L-methionine = 2'-O-methylcytidine(1402) in 16S rRNA + S-adenosyl-L-homocysteine + H(+). Catalyzes the 2'-O-methylation of the ribose of cytidine 1402 (C1402) in 16S rRNA. The chain is Ribosomal RNA small subunit methyltransferase I from Streptococcus pyogenes serotype M3 (strain ATCC BAA-595 / MGAS315).